Consider the following 151-residue polypeptide: UPF0208 membrane protein CKO_00500 (151 aa).

Helical transmembrane passes span 46–65 (YAIRFMPPIAVFTLCWQIAL) and 69–91 (LGPAVATALFALSLPMQGMWWLG).

The protein belongs to the UPF0208 family.

The protein localises to the cell inner membrane. The protein is UPF0208 membrane protein CKO_00500 of Citrobacter koseri (strain ATCC BAA-895 / CDC 4225-83 / SGSC4696).